A 368-amino-acid chain; its full sequence is Chaperone protein DnaJ (368 aa).

Residues 5–70 form the J domain; the sequence is DYYEVLGVSK…EKRSMYDRMG (66 aa). The segment at 132–210 adopts a CR-type zinc-finger fold; the sequence is GVKKTITFTA…CHGSGVADRQ (79 aa). Zn(2+) contacts are provided by C145, C148, C162, C165, C184, C187, C198, and C201. CXXCXGXG motif repeat units follow at residues 145-152, 162-169, 184-191, and 198-205; these read CEVCDGKG, CRTCHGTG, CGTCRGQG, and CQSCHGSG. The disordered stretch occupies residues 349–368; sequence DGDEHSSSPKKKSFFDRLFD. Positions 350–368 are enriched in basic and acidic residues; it reads GDEHSSSPKKKSFFDRLFD.

This sequence belongs to the DnaJ family. In terms of assembly, homodimer. Requires Zn(2+) as cofactor.

The protein resides in the cytoplasm. Its function is as follows. Participates actively in the response to hyperosmotic and heat shock by preventing the aggregation of stress-denatured proteins and by disaggregating proteins, also in an autonomous, DnaK-independent fashion. Unfolded proteins bind initially to DnaJ; upon interaction with the DnaJ-bound protein, DnaK hydrolyzes its bound ATP, resulting in the formation of a stable complex. GrpE releases ADP from DnaK; ATP binding to DnaK triggers the release of the substrate protein, thus completing the reaction cycle. Several rounds of ATP-dependent interactions between DnaJ, DnaK and GrpE are required for fully efficient folding. Also involved, together with DnaK and GrpE, in the DNA replication of plasmids through activation of initiation proteins. The chain is Chaperone protein DnaJ from Acinetobacter baylyi (strain ATCC 33305 / BD413 / ADP1).